The chain runs to 206 residues: Small ribosomal subunit protein uS4 (206 aa).

Positions 98 to 176 constitute an S4 RNA-binding domain; it reads RRLDNVVYRL…APKWLEANRE (79 aa).

The protein belongs to the universal ribosomal protein uS4 family. Part of the 30S ribosomal subunit. Contacts protein S5. The interaction surface between S4 and S5 is involved in control of translational fidelity.

Its function is as follows. One of the primary rRNA binding proteins, it binds directly to 16S rRNA where it nucleates assembly of the body of the 30S subunit. Functionally, with S5 and S12 plays an important role in translational accuracy. This is Small ribosomal subunit protein uS4 from Gloeobacter violaceus (strain ATCC 29082 / PCC 7421).